The chain runs to 524 residues: Phytoene desaturase (neurosporene-forming) (524 aa).

An FAD-binding site is contributed by V12–G45. The segment at P500–Q524 is disordered. Residues T507–Q524 are compositionally biased toward low complexity.

The protein belongs to the carotenoid/retinoid oxidoreductase family. FAD is required as a cofactor.

It catalyses the reaction 15-cis-phytoene + 3 A = all-trans-neurosporene + 3 AH2. The protein operates within carotenoid biosynthesis. With respect to regulation, is inhibited by diphenylamine (DPA). Is also slightly inhibited by NAD, NADP or ATP in the presence of FAD. Its function is as follows. Converts phytoene into all-trans-neurosporene as the major product, via the intermediary of phytofluene and zeta-carotene, by the introduction of three double bonds. Both intermediates, phytofluene and zeta-carotene, can be used as substrates and converted to neurosporene. 1,2-epoxy phytoene is also a suitable substrate whereas the C30 diapophytoene is not. This is Phytoene desaturase (neurosporene-forming) (crtI) from Rhodobacter capsulatus (strain ATCC BAA-309 / NBRC 16581 / SB1003).